The chain runs to 158 residues: Lipoprotein signal peptidase (158 aa).

The next 3 membrane-spanning stretches (helical) occupy residues 4 to 24 (KYYITISLIVAIAILIIDQVT), 63 to 83 (KMGFFYIITIVILIVLVLFYI), and 88 to 108 (YNLFMQVAISLLFAGALGNFI). Active-site residues include aspartate 118 and aspartate 136. A helical transmembrane segment spans residues 131–151 (IFNVADSSLTIGVLFIIIALL).

This sequence belongs to the peptidase A8 family.

The protein resides in the cell membrane. The catalysed reaction is Release of signal peptides from bacterial membrane prolipoproteins. Hydrolyzes -Xaa-Yaa-Zaa-|-(S,diacylglyceryl)Cys-, in which Xaa is hydrophobic (preferably Leu), and Yaa (Ala or Ser) and Zaa (Gly or Ala) have small, neutral side chains.. It functions in the pathway protein modification; lipoprotein biosynthesis (signal peptide cleavage). In terms of biological role, this protein specifically catalyzes the removal of signal peptides from prolipoproteins. In Staphylococcus haemolyticus (strain JCSC1435), this protein is Lipoprotein signal peptidase.